An 835-amino-acid chain; its full sequence is BCL11 transcription factor A (835 aa).

The span at 1 to 12 (MSRRKQGKPQHL) shows a compositional bias: basic residues. Residues 1–41 (MSRRKQGKPQHLSKREFSPEPLEAILTDDEPDHGPLGAPEG) are disordered. Positions 1–210 (MSRRKQGKPQ…SEHGSPLTPR (210 aa)) are required for nuclear body formation and for SUMO1 recruitment. Residues 45–71 (LLTCGQCQMNFPLGDILIFIEHKRKQC) form a C2HC-type zinc finger. Zn(2+)-binding residues include Cys-48, Cys-51, His-66, and Cys-71. The residue at position 86 (Ser-86) is a Phosphoserine. Lys-123 is covalently cross-linked (Glycyl lysine isopeptide (Lys-Gly) (interchain with G-Cter in SUMO2)). Residue Ile-162 is modified to Phosphothreonine. A Glycyl lysine isopeptide (Lys-Gly) (interchain with G-Cter in SUMO2) cross-link involves residue Lys-164. The C2H2-type 1 zinc-finger motif lies at 170–193 (YTCTTCKQPFTSAWFLLQHAQNTH). At Ser-205 the chain carries Phosphoserine. At Pro-214 the chain carries Phosphothreonine. At Arg-271 the chain carries Asymmetric dimethylarginine. The disordered stretch occupies residues 323-376 (AGNTSSPPLSPGRPSPMQRLLQPFQPGSKPPFLATPPLPPLQSAPPPSQPPVKS). Ser-332 and Ser-337 each carry phosphoserine. Residues 355–372 (LATPPLPPLQSAPPPSQP) show a composition bias toward pro residues. 2 consecutive C2H2-type zinc fingers follow at residues 377 to 399 (KSCE…RRSH) and 405 to 429 (YKCN…THMH). Positions 421 to 430 (KRHMKTHMHK) are enriched in basic residues. Disordered stretches follow at residues 421 to 458 (KRHM…LVGS), 471 to 512 (KSEN…ERVD), and 572 to 619 (RSHL…GLSK). Residues 441–450 (GLSTASSPEP) show a composition bias toward polar residues. Phosphoserine occurs at positions 446 and 447. Acidic residues predominate over residues 482-506 (NGDEEEEEDDEEEEEEEEEEEEELT). Residues 574 to 584 (HLAEAEGHRDT) show a composition bias toward basic and acidic residues. Ser-608 carries the post-translational modification Phosphoserine. Lys-620 participates in a covalent cross-link: Glycyl lysine isopeptide (Lys-Gly) (interchain with G-Cter in SUMO2). 2 positions are modified to phosphoserine: Ser-625 and Ser-630. Lys-634 participates in a covalent cross-link: Glycyl lysine isopeptide (Lys-Gly) (interchain with G-Cter in SUMO1). Low complexity predominate over residues 682 to 696 (SPFASSSEHSSENGS). Thr-701 carries the post-translational modification Phosphothreonine. Positions 706-720 (LDGGISGRSGTGSGG) are enriched in gly residues. The interval 737–835 (EGRRSDTCEY…RVLNNDIKTE (99 aa)) is DNA-binding. Residues 742 to 764 (DTCEYCGKVFKNCSNLTVHRRSH) form a C2H2-type 4 zinc finger. Residues Cys-744, Cys-747, His-760, and His-764 each coordinate Zn(2+). Over residues 764–773 (HTGERPYKCE) the composition is skewed to polar residues. The disordered stretch occupies residues 765-769 (TGERP). The C2H2-type 5 zinc finger occupies 770-792 (YKCELCNYACAQSSKLTRHMKTH). Zn(2+) contacts are provided by Cys-772, Cys-775, His-788, and His-792. Residues 793–799 (GQVGKDV) form a disordered region. The segment at 800 to 823 (YKCEICKMPFSVYSTLEKHMKKWH) adopts a C2H2-type 6 zinc-finger fold. Positions 802, 805, 818, and 823 each coordinate Zn(2+).

In terms of assembly, homotetrameric; self-associates via C2HC-type zinc finger domain. Interacts with MTA2, a component of the nucleosome remodeling and deacetylase (NuRD) repressor complex. Interacts with NR2F1, PIAS3, NR2F2 and NR2F6. Interacts with TBR1. In terms of processing, sumoylated with SUMO1. In terms of tissue distribution, isoforms are expressed in a tissue-specific fashion. Isoforms 1, isoform 2, and isoform 3 are expressed at similar levels in testis, kidney and spleen. Isoform 1 is expressed in the stomach, and isoform 2 is expressed exclusively in the lung. Overexpression following proviral integration in hematopoietic cells results in the generation of myeloid leukemia.

The protein localises to the cytoplasm. The protein resides in the nucleus. In terms of biological role, transcription factor. Associated with the BAF SWI/SNF chromatin remodeling complex. Binds to the 5'-TGACCA-3' sequence motif in regulatory regions of target genes. Involved in brain development. May play a role in hematopoiesis. Essential factor in lymphopoiesis, required for B-cell formation in fetal liver. May function as a modulator of the transcriptional repression activity of NR2F2. The polypeptide is BCL11 transcription factor A (Bcl11a) (Mus musculus (Mouse)).